A 278-amino-acid chain; its full sequence is Putative cuticle collagen 91 (278 aa).

Disordered stretches follow at residues 84–109 (LAKNCPPGPPGPPGAPGAAGEPGVDG) and 140–278 (GPAG…SVRQ). The span at 89–98 (PPGPPGPPGA) shows a compositional bias: pro residues. 3 triple-helical region regions span residues 91 to 120 (GPPGPPGAPGAAGEPGVDGDAGAAGIDGVA), 137 to 199 (GEAG…NGQR), and 202 to 264 (GTPG…PGPD). The segment covering 99 to 109 (PGAAGEPGVDG) has biased composition (low complexity). The segment covering 158–167 (GADGQGGAPG) has biased composition (gly residues). Composition is skewed to low complexity over residues 172-228 (EGPA…AGAP) and 236-245 (APGVDGQPGA).

The protein belongs to the cuticular collagen family. Collagen polypeptide chains are complexed within the cuticle by disulfide bonds and other types of covalent cross-links.

Nematode cuticles are composed largely of collagen-like proteins. The cuticle functions both as an exoskeleton and as a barrier to protect the worm from its environment. This chain is Putative cuticle collagen 91 (col-91), found in Caenorhabditis elegans.